A 444-amino-acid chain; its full sequence is Chromosome partition protein MukF (444 aa).

The interval 212-240 (LDETSGNLRELQDTLNAAGDKLQAQLLRI) is leucine-zipper.

It belongs to the MukF family. In terms of assembly, interacts, and probably forms a ternary complex, with MukE and MukB via its C-terminal region. The complex formation is stimulated by calcium or magnesium. It is required for an interaction between MukE and MukB.

It is found in the cytoplasm. The protein localises to the nucleoid. Involved in chromosome condensation, segregation and cell cycle progression. May participate in facilitating chromosome segregation by condensation DNA from both sides of a centrally located replisome during cell division. Not required for mini-F plasmid partitioning. Probably acts via its interaction with MukB and MukE. Overexpression results in anucleate cells. It has a calcium binding activity. In Haemophilus influenzae (strain PittEE), this protein is Chromosome partition protein MukF.